A 201-amino-acid chain; its full sequence is MPRAVAGPEIERLIQLIARLPGLGPRSARRVALHLIKKREALMAPLAAAMTDALGKIVECRRCGNVDVCDPCTICTDTSRDRRTLVVVADVGDLWALERAGVLNAPYHVLGGVLSPLDGVGPEDLNLAKLVTRVHEDEVGEVILALGATVDGQTTAHYITDLLREAHVRVTRLAQGVPVGGELDYLDEGTLSAAIRARTQM.

The C4-type zinc-finger motif lies at 60 to 75 (CRRCGNVDVCDPCTIC). A Toprim domain is found at 83–178 (RTLVVVADVG…RVTRLAQGVP (96 aa)).

This sequence belongs to the RecR family.

May play a role in DNA repair. It seems to be involved in an RecBC-independent recombinational process of DNA repair. It may act with RecF and RecO. The sequence is that of Recombination protein RecR from Xanthobacter autotrophicus (strain ATCC BAA-1158 / Py2).